A 35-amino-acid chain; its full sequence is VIGGAKCNINEHRSIVLLYSSRLFGHTLINKEWVL.

Residues 1–35 (VIGGAKCNINEHRSIVLLYSSRLFGHTLINKEWVL) form the Peptidase S1 domain.

This sequence belongs to the peptidase S1 family. Snake venom subfamily. In terms of assembly, monomer. In terms of tissue distribution, expressed by the venom gland.

It is found in the secreted. Its activity is regulated as follows. Inhibited by diisopropylfluorophosphate (DFP). Thrombin-like snake venom serine protease, that cleaves both alpha-chain (FGA) and beta-chain (FGB) of fibrinogen. Partially degrades factor X (F10), and release bradykinin from kininogen (KNG). Potently induces platelet aggregation. Shows a proteolytic activity towards protein constituents of the platelets cytoskeleton. Hydrolyzes actin, actin-binding protein, and P235. Shows a preferential cleavage at Arg-|-Xaa bonds. This chain is Thrombin-like enzyme cerastobin, found in Cerastes vipera (Sahara sand viper).